The primary structure comprises 949 residues: Translation initiation factor IF-2 (949 aa).

Disordered regions lie at residues 61–122 (IQAN…PIIK), 139–159 (VENTPKAVSHSQIEKAKQKLQ), and 171–284 (LTQS…NKSH). Basic and acidic residues-rich tracts occupy residues 112–122 (KKKEAPAPIIK) and 150–159 (QIEKAKQKLQ). The segment covering 174-190 (SNTNTTNNANSASNVSN) has biased composition (low complexity). The segment covering 191 to 208 (AKKEISEVKKQEQEIKRH) has biased composition (basic and acidic residues). Basic residues predominate over residues 209–220 (ENIKRRTGFRVI). Residues 249 to 264 (EDIKKEWQEKDKQETK) show a composition bias toward basic and acidic residues. One can recognise a tr-type G domain in the interval 448 to 617 (ERPPVVTIMG…LIQADIMELK (170 aa)). The G1 stretch occupies residues 457–464 (GHVDHGKT). 457 to 464 (GHVDHGKT) provides a ligand contact to GTP. The tract at residues 482–486 (GITQH) is G2. The interval 503–506 (DTPG) is G3. GTP is bound by residues 503 to 507 (DTPGH) and 557 to 560 (NKMD). The tract at residues 557–560 (NKMD) is G4. Residues 593–595 (SAK) form a G5 region.

This sequence belongs to the TRAFAC class translation factor GTPase superfamily. Classic translation factor GTPase family. IF-2 subfamily.

It is found in the cytoplasm. One of the essential components for the initiation of protein synthesis. Protects formylmethionyl-tRNA from spontaneous hydrolysis and promotes its binding to the 30S ribosomal subunits. Also involved in the hydrolysis of GTP during the formation of the 70S ribosomal complex. The sequence is that of Translation initiation factor IF-2 (infB) from Helicobacter pylori (strain J99 / ATCC 700824) (Campylobacter pylori J99).